A 248-amino-acid chain; its full sequence is Coproheme decarboxylase (248 aa).

Fe-coproporphyrin III contacts are provided by residues R130, 144 to 148 (YPMDK), H171, Q184, and S222. Y144 is a catalytic residue.

It belongs to the ChdC family. Type 1 subfamily. It depends on Fe-coproporphyrin III as a cofactor.

It carries out the reaction Fe-coproporphyrin III + 2 H2O2 + 2 H(+) = heme b + 2 CO2 + 4 H2O. It catalyses the reaction Fe-coproporphyrin III + H2O2 + H(+) = harderoheme III + CO2 + 2 H2O. The enzyme catalyses harderoheme III + H2O2 + H(+) = heme b + CO2 + 2 H2O. It functions in the pathway porphyrin-containing compound metabolism; protoheme biosynthesis. In terms of biological role, involved in coproporphyrin-dependent heme b biosynthesis. Catalyzes the decarboxylation of Fe-coproporphyrin III (coproheme) to heme b (protoheme IX), the last step of the pathway. The reaction occurs in a stepwise manner with a three-propionate intermediate. This chain is Coproheme decarboxylase, found in Geobacillus sp. (strain WCH70).